The chain runs to 341 residues: Basic membrane protein D (341 aa).

A signal peptide spans Met-1–Ala-16. A lipid anchor (N-palmitoyl cysteine) is attached at Cys-17. Cys-17 carries the S-diacylglycerol cysteine lipid modification.

The protein belongs to the BMP lipoprotein family. Monomer.

The protein localises to the cell inner membrane. In terms of biological role, binds adenosine and inosine. May be part of an ABC-type nucleoside uptake system involved in the purine salvage pathway. In Borreliella burgdorferi (strain JD1) (Borrelia burgdorferi), this protein is Basic membrane protein D.